Consider the following 148-residue polypeptide: Deoxyuridine 5'-triphosphate nucleotidohydrolase (148 aa).

Residues 67–69 (RSG), asparagine 80, 84–86 (LID), and methionine 94 each bind substrate.

The protein belongs to the dUTPase family. Mg(2+) is required as a cofactor.

It catalyses the reaction dUTP + H2O = dUMP + diphosphate + H(+). It functions in the pathway pyrimidine metabolism; dUMP biosynthesis; dUMP from dCTP (dUTP route): step 2/2. In terms of biological role, this enzyme is involved in nucleotide metabolism: it produces dUMP, the immediate precursor of thymidine nucleotides and it decreases the intracellular concentration of dUTP so that uracil cannot be incorporated into DNA. The protein is Deoxyuridine 5'-triphosphate nucleotidohydrolase of Burkholderia cenocepacia (strain ATCC BAA-245 / DSM 16553 / LMG 16656 / NCTC 13227 / J2315 / CF5610) (Burkholderia cepacia (strain J2315)).